Consider the following 477-residue polypeptide: 23S rRNA (uracil(1939)-C(5))-methyltransferase RlmD (477 aa).

The TRAM domain maps to 7 to 66; the sequence is KTENFPPDWLLVESLDLEAQGVAHRADGKVVFIKGALPFELVSANVHRKKNNWEQGVVTA. Residues C79, C89, C92, and C171 each contribute to the [4Fe-4S] cluster site. Positions 280, 309, 314, 330, 365, and 386 each coordinate S-adenosyl-L-methionine. Catalysis depends on C432, which acts as the Nucleophile.

It belongs to the class I-like SAM-binding methyltransferase superfamily. RNA M5U methyltransferase family. RlmD subfamily.

The catalysed reaction is uridine(1939) in 23S rRNA + S-adenosyl-L-methionine = 5-methyluridine(1939) in 23S rRNA + S-adenosyl-L-homocysteine + H(+). Catalyzes the formation of 5-methyl-uridine at position 1939 (m5U1939) in 23S rRNA. This Albidiferax ferrireducens (strain ATCC BAA-621 / DSM 15236 / T118) (Rhodoferax ferrireducens) protein is 23S rRNA (uracil(1939)-C(5))-methyltransferase RlmD.